The sequence spans 182 residues: Ribosome maturation factor RimM (182 aa).

The region spanning 103–182 (EDEFYWRELF…RIEVDWDPGF (80 aa)) is the PRC barrel domain.

The protein belongs to the RimM family. Binds ribosomal protein uS19.

The protein resides in the cytoplasm. An accessory protein needed during the final step in the assembly of 30S ribosomal subunit, possibly for assembly of the head region. Essential for efficient processing of 16S rRNA. May be needed both before and after RbfA during the maturation of 16S rRNA. It has affinity for free ribosomal 30S subunits but not for 70S ribosomes. The chain is Ribosome maturation factor RimM from Vibrio vulnificus (strain CMCP6).